The primary structure comprises 398 residues: Formate-dependent phosphoribosylglycinamide formyltransferase (398 aa).

N(1)-(5-phospho-beta-D-ribosyl)glycinamide contacts are provided by residues 21 to 22 (EL) and Glu81. ATP contacts are provided by residues Arg113, Lys154, 194–197 (EEYV), and Glu202. The ATP-grasp domain occupies 118 to 314 (RFAAEKVKVP…EFQVHVRSAL (197 aa)). Residues Glu273 and Glu285 each contribute to the Mg(2+) site. N(1)-(5-phospho-beta-D-ribosyl)glycinamide-binding positions include Asp292, Lys362, and 369–370 (RR).

It belongs to the PurK/PurT family. As to quaternary structure, homodimer.

It carries out the reaction N(1)-(5-phospho-beta-D-ribosyl)glycinamide + formate + ATP = N(2)-formyl-N(1)-(5-phospho-beta-D-ribosyl)glycinamide + ADP + phosphate + H(+). It participates in purine metabolism; IMP biosynthesis via de novo pathway; N(2)-formyl-N(1)-(5-phospho-D-ribosyl)glycinamide from N(1)-(5-phospho-D-ribosyl)glycinamide (formate route): step 1/1. Its function is as follows. Involved in the de novo purine biosynthesis. Catalyzes the transfer of formate to 5-phospho-ribosyl-glycinamide (GAR), producing 5-phospho-ribosyl-N-formylglycinamide (FGAR). Formate is provided by PurU via hydrolysis of 10-formyl-tetrahydrofolate. The protein is Formate-dependent phosphoribosylglycinamide formyltransferase of Sulfolobus acidocaldarius (strain ATCC 33909 / DSM 639 / JCM 8929 / NBRC 15157 / NCIMB 11770).